A 143-amino-acid chain; its full sequence is Large ribosomal subunit protein uL15 (143 aa).

Residues 1 to 57 (MQLNNLKPAAGSKHAKRRVGRGIGSGLGKTAGRGHKGQKSRSGGFHKVGFEGGQMPL) form a disordered region. Positions 21-31 (RGIGSGLGKTA) are enriched in gly residues.

The protein belongs to the universal ribosomal protein uL15 family. In terms of assembly, part of the 50S ribosomal subunit.

Its function is as follows. Binds to the 23S rRNA. This is Large ribosomal subunit protein uL15 from Ralstonia nicotianae (strain ATCC BAA-1114 / GMI1000) (Ralstonia solanacearum).